Consider the following 806-residue polypeptide: Glycerol-3-phosphate acyltransferase (806 aa).

Residues Cys305 to Met310 carry the HXXXXD motif motif.

The protein belongs to the GPAT/DAPAT family.

It localises to the cell inner membrane. The catalysed reaction is sn-glycerol 3-phosphate + an acyl-CoA = a 1-acyl-sn-glycero-3-phosphate + CoA. It functions in the pathway phospholipid metabolism; CDP-diacylglycerol biosynthesis; CDP-diacylglycerol from sn-glycerol 3-phosphate: step 1/3. This Salmonella agona (strain SL483) protein is Glycerol-3-phosphate acyltransferase.